A 224-amino-acid chain; its full sequence is Ribosomal RNA small subunit methyltransferase G (224 aa).

S-adenosyl-L-methionine-binding positions include glycine 89, phenylalanine 94, 140-141 (AE), and arginine 153.

It belongs to the methyltransferase superfamily. RNA methyltransferase RsmG family.

It is found in the cytoplasm. Its function is as follows. Specifically methylates the N7 position of a guanine in 16S rRNA. This Bacteroides fragilis (strain YCH46) protein is Ribosomal RNA small subunit methyltransferase G.